A 142-amino-acid polypeptide reads, in one-letter code: Transcriptional regulator MraZ (142 aa).

SpoVT-AbrB domains lie at 5-51 and 77-120; these read ASAL…PRPE and AADV…DAAT.

This sequence belongs to the MraZ family. In terms of assembly, forms oligomers.

The protein localises to the cytoplasm. The protein resides in the nucleoid. This chain is Transcriptional regulator MraZ, found in Cupriavidus taiwanensis (strain DSM 17343 / BCRC 17206 / CCUG 44338 / CIP 107171 / LMG 19424 / R1) (Ralstonia taiwanensis (strain LMG 19424)).